The primary structure comprises 135 residues: Probable histone H2A.7 (135 aa).

Belongs to the histone H2A family. In terms of assembly, the nucleosome is a histone octamer containing two molecules each of H2A, H2B, H3 and H4 assembled in one H3-H4 heterotetramer and two H2A-H2B heterodimers. The octamer wraps approximately 147 bp of DNA.

The protein localises to the nucleus. It is found in the chromosome. In terms of biological role, core component of nucleosome. Nucleosomes wrap and compact DNA into chromatin, limiting DNA accessibility to the cellular machineries which require DNA as a template. Histones thereby play a central role in transcription regulation, DNA repair, DNA replication and chromosomal stability. DNA accessibility is regulated via a complex set of post-translational modifications of histones, also called histone code, and nucleosome remodeling. The protein is Probable histone H2A.7 of Oryza sativa subsp. indica (Rice).